Consider the following 116-residue polypeptide: U11-theraphotoxin-Hhn1c (116 aa).

A signal peptide spans 1 to 21 (MNTVRVTFLLVFVLAVSLGQA). Positions 22–74 (DKDENRMEMQEKTEQGKSYLDFAENLLLQKLEELEAKLLEEDSEESRNSRQKR) are excised as a propeptide. The disordered stretch occupies residues 61 to 83 (EEDSEESRNSRQKRCIGEGVPCD). Intrachain disulfides connect cysteine 75–cysteine 90, cysteine 82–cysteine 95, and cysteine 89–cysteine 110.

It belongs to the neurotoxin 14 (magi-1) family. 01 (HNTX-16) subfamily. In terms of tissue distribution, expressed by the venom gland.

It localises to the secreted. Functionally, probable ion channel inhibitor. This Cyriopagopus hainanus (Chinese bird spider) protein is U11-theraphotoxin-Hhn1c.